Consider the following 427-residue polypeptide: UPF0415 protein C7orf25 homolog (427 aa).

Residues 200–234 (GGEEEDEEDQEGDHEDLVEEEEDGEDDNDDDSDDT) are compositionally biased toward acidic residues. Positions 200-236 (GGEEEDEEDQEGDHEDLVEEEEDGEDDNDDDSDDTDL) are disordered.

This sequence belongs to the UPF0415 family.

The protein is UPF0415 protein C7orf25 homolog of Danio rerio (Zebrafish).